Reading from the N-terminus, the 29-residue chain is Cytochrome b6-f complex subunit 8 (29 aa).

Residues 3–23 (IVDIAWAALMVVFTFSLSLVV) traverse the membrane as a helical segment.

It belongs to the PetN family. As to quaternary structure, the 4 large subunits of the cytochrome b6-f complex are cytochrome b6, subunit IV (17 kDa polypeptide, PetD), cytochrome f and the Rieske protein, while the 4 small subunits are PetG, PetL, PetM and PetN. The complex functions as a dimer.

Its subcellular location is the plastid. It localises to the chloroplast thylakoid membrane. Component of the cytochrome b6-f complex, which mediates electron transfer between photosystem II (PSII) and photosystem I (PSI), cyclic electron flow around PSI, and state transitions. This Gnetum parvifolium (Small-leaved jointfir) protein is Cytochrome b6-f complex subunit 8.